We begin with the raw amino-acid sequence, 193 residues long: Phosphoheptose isomerase (193 aa).

In terms of domain architecture, SIS spans 37-193 (LADSFKAGGK…QLIEKEMVKA (157 aa)). 52-54 (NGG) provides a ligand contact to substrate. H61 and E65 together coordinate Zn(2+). Substrate is bound by residues E65, 93–94 (ND), 119–121 (STS), S124, and Q172. Zn(2+)-binding residues include Q172 and H180.

Belongs to the SIS family. GmhA subfamily. Homotetramer. Zn(2+) is required as a cofactor.

Its subcellular location is the cytoplasm. The enzyme catalyses 2 D-sedoheptulose 7-phosphate = D-glycero-alpha-D-manno-heptose 7-phosphate + D-glycero-beta-D-manno-heptose 7-phosphate. It functions in the pathway carbohydrate biosynthesis; D-glycero-D-manno-heptose 7-phosphate biosynthesis; D-glycero-alpha-D-manno-heptose 7-phosphate and D-glycero-beta-D-manno-heptose 7-phosphate from sedoheptulose 7-phosphate: step 1/1. The protein operates within bacterial outer membrane biogenesis; LPS core biosynthesis. Functionally, catalyzes the isomerization of sedoheptulose 7-phosphate in D-glycero-D-manno-heptose 7-phosphate. This chain is Phosphoheptose isomerase, found in Yersinia pestis.